We begin with the raw amino-acid sequence, 716 residues long: MIAKKEKNKTPKDSMTLLPCFYFVELPIVASSVVSLYFLELTDLFQPAKVGFQCHDRSLSMPYVETNEELIPLLMLLSLAFAAPAASIMVGEGMVYCLQSRLWGRGPGGVEGSINAGGCNFNSFLRRTVRFVGVHVFGLCATALVTDVIQLATGYHTPFFLTVCKPNYTLLGTSCEANPYITQDICSGHDTHAILSARKTFPSQHATLSAFAAVYVSMYFNSVISDATKLLKPILVFAFAIAAGVCGLTQITQYRSHPVDVYAGFLIGAGIAAYLACHAVGNFQAPPAEKVPTPAPAKDALRVLTQRGHESMYQQNKSVSTDELGPPGRLEGVPRPVAREKTSLGSLKRASVDVDLLAPRSPMGKEGMVTFSNTLPRVSTPSLDDPSRRHMTIHVPLDASRSRQLISEWKQKSLEGRGLGLPDEASPAHLRAPAEQVAEEEEEEEEEEEEEEEEEEEEEGPVPPSLYPTVQARPGLGPRVILPPRPGPQPLIHIPEEVVQAGAGLSPKSSASVRAKWLSMVEKGGGPVAVAPPQPRVANPPRLLQVIAMSKAAGGPKAETASSSSASSDSSQYRSPSDRDSASIVTIDAHAPHHPVVHLSAGSTPWEWKAKVVEGEGGYELGDLARGFRSSCKQPGIGPGSPVSDVDQEEPRFGAVATVNLATGEGLPPPGASEGALGAGSRESTLRRQVGALGEREVEAEAESYYRRMQARRYQD.

The next 3 helical transmembrane spans lie at 18 to 38 (LPCFYFVELPIVASSVVSLYF), 70 to 90 (LIPLLMLLSLAFAAPAASIMV), and 131 to 151 (FVGVHVFGLCATALVTDVIQL). Asparagine 167 carries an N-linked (GlcNAc...) asparagine glycan. The next 3 helical transmembrane spans lie at 205-225 (HATLSAFAAVYVSMYFNSVIS), 231-251 (LKPILVFAFAIAAGVCGLTQI), and 261-281 (VYAGFLIGAGIAAYLACHAVG). Positions 311–334 (SMYQQNKSVSTDELGPPGRLEGVP) are disordered. The segment covering 312 to 321 (MYQQNKSVST) has biased composition (polar residues). Asparagine 316 carries an N-linked (GlcNAc...) asparagine glycan. A phosphoserine mark is found at serine 320 and serine 351. Threonine 374 carries the phosphothreonine modification. A disordered region spans residues 416–488 (GRGLGLPDEA…RVILPPRPGP (73 aa)). At serine 426 the chain carries Phosphoserine. Residues 437–460 (VAEEEEEEEEEEEEEEEEEEEEEG) are compositionally biased toward acidic residues. Serine 506 carries the post-translational modification Phosphoserine. The tract at residues 548-589 (AMSKAAGGPKAETASSSSASSDSSQYRSPSDRDSASIVTIDA) is disordered. Over residues 562–575 (SSSSASSDSSQYRS) the composition is skewed to low complexity. A Phosphoserine modification is found at serine 641. The interval 664-694 (GEGLPPPGASEGALGAGSRESTLRRQVGALG) is disordered.

This sequence belongs to the PA-phosphatase related phosphoesterase family.

The protein resides in the membrane. The polypeptide is Phospholipid phosphatase-related protein type 3 (Rattus norvegicus (Rat)).